A 231-amino-acid polypeptide reads, in one-letter code: MFLVGLTGGIASGKSSVIQVFQQLGCAVIDVDIIARHIVQPGYPAHRRIVEAFGTEVLLENGDIDRKVLGDLIFNQPDRRHLLNSITHPEICKEMMKETFKYFLRGYRYVILDIPLLFETKKLLKYMKHTVVVYCDRDTQLARLMRRNNLSREDAEARIKAQLPLKDKARMARHVLDNSGEWSVTKRQVVLLHAELEHSLEYLPLRLGVLTGLAGIVGLLYLLTHYLLPSP.

Residues 3 to 207 (LVGLTGGIAS…HSLEYLPLRL (205 aa)) enclose the DPCK domain. Residue 8–15 (GGIASGKS) coordinates ATP.

Belongs to the CoaE family.

In Bos taurus (Bovine), this protein is Dephospho-CoA kinase domain-containing protein (DCAKD).